Reading from the N-terminus, the 127-residue chain is MRHRKSGRQLNRNSSHRQAMFRNMASSLVSHEIIKTTLPKAKELRRVVEPLITLAKEDSVANRRLAFARTRNIETVAKLFNELGPRFAQRAGGYTRILKCGFRAGDNAPMAYIELVDRPETAAAVEE.

The protein belongs to the bacterial ribosomal protein bL17 family. Part of the 50S ribosomal subunit. Contacts protein L32.

The sequence is that of Large ribosomal subunit protein bL17 from Mannheimia succiniciproducens (strain KCTC 0769BP / MBEL55E).